A 147-amino-acid chain; its full sequence is Succinate dehydrogenase assembly factor 2, mitochondrial (147 aa).

It belongs to the SDHAF2 family. As to quaternary structure, interacts with the flavoprotein subunit within the SDH catalytic dimer.

The protein resides in the mitochondrion matrix. Plays an essential role in the assembly of succinate dehydrogenase (SDH), an enzyme complex (also referred to as respiratory complex II) that is a component of both the tricarboxylic acid (TCA) cycle and the mitochondrial electron transport chain, and which couples the oxidation of succinate to fumarate with the reduction of ubiquinone (coenzyme Q) to ubiquinol. Required for flavinylation (covalent attachment of FAD) of the flavoprotein subunit of the SDH catalytic dimer. The polypeptide is Succinate dehydrogenase assembly factor 2, mitochondrial (Drosophila grimshawi (Hawaiian fruit fly)).